Consider the following 1040-residue polypeptide: Multidrug resistance protein MdtB (1040 aa).

11 consecutive transmembrane segments (helical) span residues 15–37 (LFIL…GIIG), 345–362 (FELM…YLFL), 367–389 (ATII…MVFL), 396–418 (LTLM…VIEN), 438–460 (GEIG…PLLF), 472–494 (FAVT…TPMM), 535–557 (HPWL…WIVI), 867–889 (VWLI…ESFI), 909–931 (LIIA…IGIV), 968–990 (ILMT…GVGT), and 1000–1022 (MVGG…YLLF).

It belongs to the resistance-nodulation-cell division (RND) (TC 2.A.6) family. MdtB subfamily. In terms of assembly, part of a tripartite efflux system composed of MdtA, MdtB and MdtC. MdtB forms a heteromultimer with MdtC.

Its subcellular location is the cell inner membrane. This chain is Multidrug resistance protein MdtB, found in Salmonella typhimurium (strain LT2 / SGSC1412 / ATCC 700720).